Consider the following 213-residue polypeptide: Nucleolar protein 12 (213 aa).

Residues 33–96 (GFHKRKVERK…RLVTAKTESV (64 aa)) are a coiled coil. The tract at residues 118 to 213 (ARLLGLTPPE…LTGKARHSGE (96 aa)) is disordered. Basic residues-rich tracts occupy residues 170–182 (AHSR…KHPR) and 198–213 (KAQR…HSGE).

It belongs to the RRP17 family. In terms of assembly, interacts with KIAA1191.

The protein resides in the nucleus. The protein localises to the nucleolus. It localises to the cytoplasm. In terms of biological role, multifunctional RNA binding protein that plays a role in RNA metabolism and DNA maintenance. Participates in the resolution of DNA stress and the maintenance of genome integrity by localizing to sites of DNA insults. Also plays a role in proper nucleolar organization by limiting nucleolar size and regulating nucleolar number. Mechanistically, regulates the nucleolar levels of fibrillarin and nucleolin, two key players in pre-rRNA processing and ribosome assembly. The sequence is that of Nucleolar protein 12 (NOL12) from Homo sapiens (Human).